A 298-amino-acid chain; its full sequence is Enoyl-CoA hydratase AFT6-1 (298 aa).

The segment at 1–39 (MTYSTTKSVAMNPDEDAPPSDINSSGRLMSHSEVEPRGN) is disordered.

Belongs to the enoyl-CoA hydratase/isomerase family.

The enzyme catalyses a (3S)-3-hydroxyacyl-CoA = a (2E)-enoyl-CoA + H2O. The catalysed reaction is a 4-saturated-(3S)-3-hydroxyacyl-CoA = a (3E)-enoyl-CoA + H2O. The protein operates within mycotoxin biosynthesis. In terms of biological role, enoyl-CoA hydratase; part of the gene clusters that mediate the biosynthesis of the host-selective toxins (HSTs) AF-toxins responsible for Alternaria black spot of strawberry disease by the strawberry pathotype. AF-toxin I and III are valine derivatives of 2,3-dyhydroxy-isovaleric acid and 2-hydroxy-isovaleric acid respectively, while AF II is an isoleucine derivative of 2-hydroxy-valeric acid. These derivatives are bound to a 9,10-epoxy-8-hydroxy-9-methyl-decatrienoic acid (EDA) moiety. On cellular level, AF-toxin affects plasma membrane of susceptible cells and cause a sudden increase in loss of K(+) after a few minutes of toxin treatment. The aldo-keto reductase AFTS1 catalyzes the conversion of 2-keto-isovaleric acid (2-KIV) to 2-hydroxy-isovaleric acid (2-HIV) by reduction of its ketone to an alcohol. The acyl-CoA ligase AFT1, the hydrolase AFT2 and the enoyl-CoA hydratases AFT3 and AFT6, but also the polyketide synthase AFT9, the acyl-CoA dehydrogenase AFT10, the cytochrome P450 monooxygenase AFT11 and the oxidoreductase AFT12 are all involved in the biosynthesis of the AK-, AF- and ACT-toxin common EDA structural moiety. The exact function of each enzyme, and of additional enzymes identified within the AF-toxin clusters have still to be determined. The polypeptide is Enoyl-CoA hydratase AFT6-1 (Alternaria alternata (Alternaria rot fungus)).